The primary structure comprises 248 residues: Acetylglutamate kinase (248 aa).

Residues 36-37, Arg-58, and Asn-147 contribute to the substrate site; that span reads GG.

This sequence belongs to the acetylglutamate kinase family. ArgB subfamily.

Its subcellular location is the cytoplasm. The enzyme catalyses N-acetyl-L-glutamate + ATP = N-acetyl-L-glutamyl 5-phosphate + ADP. Its pathway is amino-acid biosynthesis; L-arginine biosynthesis; N(2)-acetyl-L-ornithine from L-glutamate: step 2/4. Its function is as follows. Catalyzes the ATP-dependent phosphorylation of N-acetyl-L-glutamate. The sequence is that of Acetylglutamate kinase from Thermus thermophilus (strain ATCC BAA-163 / DSM 7039 / HB27).